The following is a 263-amino-acid chain: MARGPKKHLKRVAAPKHWMLDKLTGVFAPRPSTGPHKLRECLPLIVFLRNRLKYALTGDEVKKICMQRFIKIDGKVRVDVTYPAGFMDVISIEKTGEHFRLVYDTKGRFAVHRITVEEAKYKLCKVRKITVGVKGIPHLVTHDARTIRYPDPVIKVNDTVQIDLGTGKIINFIKFDTGNLCMVIGGANLGRVGVITNRERHPGSFDVVHVKDANGNSFATRISNIFVIGNGNKPWISLPRGKGIRLTVAEERDKRLATKQSSG.

The S4 RNA-binding domain maps to 42 to 104; the sequence is LPLIVFLRNR…TGEHFRLVYD (63 aa).

The protein belongs to the eukaryotic ribosomal protein eS4 family.

The protein is Small ribosomal subunit protein eS4 (RPS4Y1) of Gorilla gorilla gorilla (Western lowland gorilla).